The sequence spans 173 residues: HTH-type transcriptional regulator IscR (173 aa).

One can recognise an HTH rrf2-type domain in the interval 2-131; it reads KLTSKGRYAV…NDITLGELMK (130 aa). The H-T-H motif DNA-binding region spans 28 to 51; that stretch reads LADISERQGISLSYLEQLFSKLRK. [2Fe-2S] cluster is bound by residues C92, C98, and C104.

The cofactor is [2Fe-2S] cluster.

Regulates the transcription of several operons and genes involved in the biogenesis of Fe-S clusters and Fe-S-containing proteins. In Vibrio atlanticus (strain LGP32) (Vibrio splendidus (strain Mel32)), this protein is HTH-type transcriptional regulator IscR.